Consider the following 461-residue polypeptide: Cysteine--tRNA ligase (461 aa).

A Zn(2+)-binding site is contributed by Cys28. A 'HIGH' region motif is present at residues 30-40 (ITVYDLCHIGH). The Zn(2+) site is built by Cys209, His234, and Glu238. Residues 266–270 (KMSKS) carry the 'KMSKS' region motif. Lys269 provides a ligand contact to ATP.

The protein belongs to the class-I aminoacyl-tRNA synthetase family. Monomer. It depends on Zn(2+) as a cofactor.

It localises to the cytoplasm. It catalyses the reaction tRNA(Cys) + L-cysteine + ATP = L-cysteinyl-tRNA(Cys) + AMP + diphosphate. The chain is Cysteine--tRNA ligase from Escherichia coli (strain K12 / MC4100 / BW2952).